A 220-amino-acid chain; its full sequence is Probable nicotinate-nucleotide adenylyltransferase (220 aa).

The protein belongs to the NadD family.

The catalysed reaction is nicotinate beta-D-ribonucleotide + ATP + H(+) = deamido-NAD(+) + diphosphate. It participates in cofactor biosynthesis; NAD(+) biosynthesis; deamido-NAD(+) from nicotinate D-ribonucleotide: step 1/1. In terms of biological role, catalyzes the reversible adenylation of nicotinate mononucleotide (NaMN) to nicotinic acid adenine dinucleotide (NaAD). In Serratia proteamaculans (strain 568), this protein is Probable nicotinate-nucleotide adenylyltransferase.